The sequence spans 78 residues: Esculentin-2ISa (78 aa).

The N-terminal stretch at 1–22 is a signal peptide; it reads MFTLKKSLLLLFFLGTISLSVC. Positions 23–39 are cleaved as a propeptide — removed in mature form; it reads KQERDADYEDKGEVEEV. Cysteines 72 and 78 form a disulfide.

In terms of tissue distribution, expressed by the skin glands.

It localises to the secreted. In terms of biological role, has antimicrobial activity against Gram-negative bacterium E.coli ATCC 8739 (MIC=12.5 ug), against Gram positive bacteria S.aureus ATCC 6538 (MIC=3.1 ug), methicillin-resistant S.aureus ATCC 43300 (MIC=25 ug), B.subtilis ATCC 6633 (MIC=6.3 ug) and against fungus C.albicans ATCC 90028 (MIC=100 ug). The sequence is that of Esculentin-2ISa from Odorrana ishikawae (Ishikawa's frog).